Consider the following 350-residue polypeptide: UDP-glucose 4-epimerase (350 aa).

NAD(+) contacts are provided by residues 13-15, 34-38, 67-68, F89, and K93; these read GYI, DNLCN, and DI. Substrate is bound at residue 133 to 135; sequence SAT. The active-site Proton acceptor is the Y158. The NAD(+) site is built by K162 and Y186. Substrate contacts are provided by residues 186-188, 207-209, 225-227, R240, and 303-306; these read YFN, NNL, SVY, and RSGD.

Belongs to the NAD(P)-dependent epimerase/dehydratase family. As to quaternary structure, homodimer. It depends on NAD(+) as a cofactor.

It catalyses the reaction UDP-alpha-D-glucose = UDP-alpha-D-galactose. It carries out the reaction UDP-N-acetyl-alpha-D-glucosamine = UDP-N-acetyl-alpha-D-galactosamine. Its pathway is carbohydrate metabolism; galactose metabolism. In terms of biological role, catalyzes two distinct but analogous reactions: the reversible epimerization of UDP-glucose to UDP-galactose and the reversible epimerization of UDP-N-acetylglucosamine to UDP-N-acetylgalactosamine. The reaction with UDP-Gal plays a critical role in the Leloir pathway of galactose catabolism in which galactose is converted to the glycolytic intermediate glucose 6-phosphate. It contributes to the catabolism of dietary galactose and enables the endogenous biosynthesis of both UDP-Gal and UDP-GalNAc when exogenous sources are limited. Both UDP-sugar interconversions are important in the synthesis of glycoproteins and glycolipids. This is UDP-glucose 4-epimerase (Gale) from Drosophila melanogaster (Fruit fly).